A 193-amino-acid chain; its full sequence is NADH-quinone oxidoreductase subunit B (193 aa).

The [4Fe-4S] cluster site is built by cysteine 72, cysteine 73, cysteine 137, and cysteine 167.

The protein belongs to the complex I 20 kDa subunit family. In terms of assembly, NDH-1 is composed of 14 different subunits. Subunits NuoB, C, D, E, F, and G constitute the peripheral sector of the complex. Requires [4Fe-4S] cluster as cofactor.

It localises to the cell inner membrane. It carries out the reaction a quinone + NADH + 5 H(+)(in) = a quinol + NAD(+) + 4 H(+)(out). In terms of biological role, NDH-1 shuttles electrons from NADH, via FMN and iron-sulfur (Fe-S) centers, to quinones in the respiratory chain. The immediate electron acceptor for the enzyme in this species is believed to be ubiquinone. Couples the redox reaction to proton translocation (for every two electrons transferred, four hydrogen ions are translocated across the cytoplasmic membrane), and thus conserves the redox energy in a proton gradient. In Bartonella quintana (strain Toulouse) (Rochalimaea quintana), this protein is NADH-quinone oxidoreductase subunit B.